Reading from the N-terminus, the 623-residue chain is uncharacterized protein (623 aa).

Positions 256–351 form a coiled coil; it reads AEEKLLSKNK…EEIHGLKKKN (96 aa). 2 disordered regions span residues 417–485 and 497–536; these read NRRN…SPSS and ALSS…ECAT. Residues 422–431 are compositionally biased toward polar residues; sequence LESVPFNTLS. Residues 452–481 are compositionally biased toward basic and acidic residues; the sequence is ELKKPAESYGDETKKPNQHNKDGSIDEKPK.

This is an uncharacterized protein from Arabidopsis thaliana (Mouse-ear cress).